Here is a 66-residue protein sequence, read N- to C-terminus: MKPSEIREMNLEEIEKKIIELRLELAKERGMLTMGTSLENPMVIRDLRRDIARLLTIKKEKLRSKR.

This sequence belongs to the universal ribosomal protein uL29 family.

This is Large ribosomal subunit protein uL29 from Thermococcus sibiricus (strain DSM 12597 / MM 739).